The following is a 200-amino-acid chain: Small ribosomal subunit protein uS4 (200 aa).

Residues 92–155 form the S4 RNA-binding domain; the sequence is SRLDNLVYRM…RNLTVVKEAL (64 aa).

Belongs to the universal ribosomal protein uS4 family. In terms of assembly, part of the 30S ribosomal subunit. Contacts protein S5. The interaction surface between S4 and S5 is involved in control of translational fidelity.

Functionally, one of the primary rRNA binding proteins, it binds directly to 16S rRNA where it nucleates assembly of the body of the 30S subunit. In terms of biological role, with S5 and S12 plays an important role in translational accuracy. The protein is Small ribosomal subunit protein uS4 of Shouchella clausii (strain KSM-K16) (Alkalihalobacillus clausii).